A 318-amino-acid polypeptide reads, in one-letter code: CRISPR-associated protein Cas7/Csa2 1 (318 aa).

This sequence belongs to the CRISPR-associated protein Cas7/Cst2/DevR family. Subtype I-a/Apern subfamily. As to quaternary structure, part of the aCascade ribonucleoprotein complex, minimally composed of Csa2 and Cas5a, which binds crRNA. Other possible components of aCascade in strain P1 are Cas6b (SSO1437) and Csa5 (SSO1443), while SSO1399, Cas5b (SSO1400) and SSO1401 have sometimes been seen weakly associated. Csa2 is probably the major RNA-binding subunit. The Csa2-Cas5a-crRNA complex also binds target DNA homologous to crRNA, probably forming an R-loop. Purified aCascade forms a filament about 6 nm in width.

Its function is as follows. CRISPR (clustered regularly interspaced short palindromic repeat) is an adaptive immune system that provides protection against mobile genetic elements (viruses, transposable elements and conjugative plasmids). CRISPR clusters contain spacers, sequences complementary to antecedent mobile elements, and target invading nucleic acids. CRISPR clusters are transcribed and processed into CRISPR RNA (crRNA). In Saccharolobus solfataricus (strain ATCC 35092 / DSM 1617 / JCM 11322 / P2) (Sulfolobus solfataricus), this protein is CRISPR-associated protein Cas7/Csa2 1 (cas7a).